The sequence spans 1530 residues: Synaptonemal complex protein 2 (1530 aa).

Positions 439-461 (EKSKSPKEFAKPSKYIKNSDKGN) are enriched in basic and acidic residues. The disordered stretch occupies residues 439-480 (EKSKSPKEFAKPSKYIKNSDKGNRNNSQLEKTTPSKRKMSEA). Residues Ser457 and Ser465 each carry the phosphoserine modification. A Phosphothreonine modification is found at Thr471. Phosphoserine is present on residues Ser494, Ser519, Ser529, and Ser538. The segment at 496–555 (VLFSNTSIPPRRRRIKPPLQMTSSAEKPSVSQTSENRVDNAASLKSRSSEGRHRRDNIDK) is disordered. The segment covering 515 to 530 (QMTSSAEKPSVSQTSE) has biased composition (polar residues). Residues 542-555 (RSSEGRHRRDNIDK) are compositionally biased toward basic and acidic residues. Residue Thr619 is modified to Phosphothreonine. Disordered stretches follow at residues 653–676 (QKSSSSISDHNSEGTGKVKYKKEQ), 693–717 (HNQQQNHPKYSGQKNTENAKQSDWP), and 755–795 (DKNP…SKGK). Phosphoserine is present on residues Ser660 and Ser664. 2 stretches are compositionally biased toward polar residues: residues 695-713 (QQQNHPKYSGQKNTENAKQ) and 755-764 (DKNPSASKNV). Phosphoserine is present on Ser936. Residue Thr938 is modified to Phosphothreonine. A disordered region spans residues 962 to 1003 (QLIDYSRNKNVKNHKSGKSRSSLEKGQPSSKMTPSKNITKKM). A compositionally biased stretch (basic residues) spans 970-979 (KNVKNHKSGK). Over residues 988–998 (QPSSKMTPSKN) the composition is skewed to polar residues. Phosphoserine occurs at positions 1136, 1138, 1145, 1161, and 1177. Thr1189 carries the phosphothreonine modification. A phosphoserine mark is found at Ser1204, Ser1234, Ser1253, Ser1295, and Ser1297. Thr1339 carries the post-translational modification Phosphothreonine.

It belongs to the SYCP2 family. As to quaternary structure, component of the lateral elements of synaptonemal complexes. Heterodimer with SYCP3. Interacts with SMC1A and SMC3. Interacts with TEX11. Phosphorylated.

The protein resides in the nucleus. Its subcellular location is the chromosome. In terms of biological role, major component of the axial/lateral elements of synaptonemal complexes (SCS) during meiotic prophase. Plays a role in the assembly of synaptonemal complexes. Required for normal meiotic chromosome synapsis during oocyte and spermatocyte development and for normal male and female fertility. Required for insertion of SYCP3 into synaptonemal complexes. May be involved in the organization of chromatin by temporarily binding to DNA scaffold attachment regions. Requires SYCP3, but not SYCP1, in order to be incorporated into the axial/lateral elements. The chain is Synaptonemal complex protein 2 (SYCP2) from Homo sapiens (Human).